The chain runs to 361 residues: 3-dehydroquinate synthase (361 aa).

Residues 72–77 (SGEKEK), 130–131 (TT), lysine 142, and lysine 151 contribute to the NAD(+) site. The Zn(2+) site is built by glutamate 184, histidine 247, and histidine 264.

This sequence belongs to the sugar phosphate cyclases superfamily. Dehydroquinate synthase family. Co(2+) serves as cofactor. Zn(2+) is required as a cofactor. Requires NAD(+) as cofactor.

It is found in the cytoplasm. It carries out the reaction 7-phospho-2-dehydro-3-deoxy-D-arabino-heptonate = 3-dehydroquinate + phosphate. Its pathway is metabolic intermediate biosynthesis; chorismate biosynthesis; chorismate from D-erythrose 4-phosphate and phosphoenolpyruvate: step 2/7. Functionally, catalyzes the conversion of 3-deoxy-D-arabino-heptulosonate 7-phosphate (DAHP) to dehydroquinate (DHQ). This Bacillus cereus (strain G9842) protein is 3-dehydroquinate synthase.